The primary structure comprises 124 residues: CRISPR-associated endoribonuclease Cas2 4 (124 aa).

Position 40 (aspartate 40) interacts with Mg(2+).

It belongs to the CRISPR-associated endoribonuclease Cas2 protein family. Homodimer, forms a heterotetramer with a Cas1 homodimer. It depends on Mg(2+) as a cofactor.

Functionally, CRISPR (clustered regularly interspaced short palindromic repeat), is an adaptive immune system that provides protection against mobile genetic elements (viruses, transposable elements and conjugative plasmids). CRISPR clusters contain sequences complementary to antecedent mobile elements and target invading nucleic acids. CRISPR clusters are transcribed and processed into CRISPR RNA (crRNA). Functions as a ssRNA-specific endoribonuclease. Involved in the integration of spacer DNA into the CRISPR cassette. The polypeptide is CRISPR-associated endoribonuclease Cas2 4 (Rhodospirillum rubrum (strain ATCC 11170 / ATH 1.1.1 / DSM 467 / LMG 4362 / NCIMB 8255 / S1)).